A 62-amino-acid polypeptide reads, in one-letter code: Toxin Tb2-II (62 aa).

In terms of domain architecture, LCN-type CS-alpha/beta spans 1–62 (KEGYAMDHEG…KVWDYATNKC (62 aa)). Cystine bridges form between Cys-11/Cys-62, Cys-15/Cys-38, Cys-23/Cys-43, and Cys-27/Cys-45.

It belongs to the long (4 C-C) scorpion toxin superfamily. Sodium channel inhibitor family. Beta subfamily. In terms of tissue distribution, expressed by the venom gland.

The protein resides in the secreted. Its function is as follows. Beta toxins bind voltage-independently at site-4 of sodium channels (Nav) and shift the voltage of activation toward more negative potentials thereby affecting sodium channel activation and promoting spontaneous and repetitive firing. This toxin is active against both mammals and insects. The protein is Toxin Tb2-II of Tityus bahiensis (Brazilian scorpion).